Reading from the N-terminus, the 109-residue chain is UPF0060 membrane protein mma_0129 (109 aa).

Transmembrane regions (helical) follow at residues 7–27, 31–51, 63–83, and 87–107; these read VALF…PYLW, GASI…VWLL, AAYG…VDGI, and NWDF…LFAP.

Belongs to the UPF0060 family.

The protein resides in the cell inner membrane. The polypeptide is UPF0060 membrane protein mma_0129 (Janthinobacterium sp. (strain Marseille) (Minibacterium massiliensis)).